The following is a 421-amino-acid chain: UDP-N-acetylglucosamine 1-carboxyvinyltransferase (421 aa).

Lys-22–Asn-23 serves as a coordination point for phosphoenolpyruvate. Arg-93 serves as a coordination point for UDP-N-acetyl-alpha-D-glucosamine. Cys-117 acts as the Proton donor in catalysis. Cys-117 bears the 2-(S-cysteinyl)pyruvic acid O-phosphothioketal mark. UDP-N-acetyl-alpha-D-glucosamine-binding positions include Arg-122 to Leu-126, Asp-308, and Val-330.

Belongs to the EPSP synthase family. MurA subfamily.

Its subcellular location is the cytoplasm. The catalysed reaction is phosphoenolpyruvate + UDP-N-acetyl-alpha-D-glucosamine = UDP-N-acetyl-3-O-(1-carboxyvinyl)-alpha-D-glucosamine + phosphate. It participates in cell wall biogenesis; peptidoglycan biosynthesis. Functionally, cell wall formation. Adds enolpyruvyl to UDP-N-acetylglucosamine. The chain is UDP-N-acetylglucosamine 1-carboxyvinyltransferase from Stutzerimonas stutzeri (strain A1501) (Pseudomonas stutzeri).